Here is a 441-residue protein sequence, read N- to C-terminus: Cysteine--tRNA ligase (441 aa).

Cys24 contacts Zn(2+). Positions 26–36 (PTVYNYIHIGN) match the 'HIGH' region motif. Residues Cys204, His230, and Glu234 each contribute to the Zn(2+) site. The 'KMSKS' region motif lies at 262–266 (KMSKS). Lys265 is a binding site for ATP.

This sequence belongs to the class-I aminoacyl-tRNA synthetase family. As to quaternary structure, monomer. The cofactor is Zn(2+).

The protein resides in the cytoplasm. It carries out the reaction tRNA(Cys) + L-cysteine + ATP = L-cysteinyl-tRNA(Cys) + AMP + diphosphate. This is Cysteine--tRNA ligase from Mycoplasma capricolum subsp. capricolum (strain California kid / ATCC 27343 / NCTC 10154).